A 74-amino-acid polypeptide reads, in one-letter code: Apolipoprotein C-I, acidic form (74 aa).

The signal sequence occupies residues 1–26 (MRLFLSLPVLVVVLSMVLEGPTPAQG).

It belongs to the apolipoprotein C1 family.

It is found in the secreted. In Colobus guereza (Mantled guereza), this protein is Apolipoprotein C-I, acidic form (APOC1A).